A 352-amino-acid chain; its full sequence is Probable transcription factor At1g11510 (352 aa).

Disordered stretches follow at residues 1-132 (MSRR…GGEE) and 239-269 (MKSN…KNNC). Over residues 56–66 (SGSDEETDSDS) the composition is skewed to acidic residues. 3 stretches are compositionally biased toward basic and acidic residues: residues 89–101 (KTSE…RSLE), 117–132 (VSGE…GGEE), and 241–259 (SNEK…HELD).

This sequence belongs to the GeBP family.

The chain is Probable transcription factor At1g11510 from Arabidopsis thaliana (Mouse-ear cress).